The chain runs to 464 residues: Desmin (464 aa).

Position 2 is a blocked amino end (Ser) (S2). The segment at 2–100 (SQSYSSSQRV…QEFLQTRTNE (99 aa)) is head. 2 positions are modified to phosphoserine; by CDK1: S7 and S23. Residue T65 is modified to Phosphothreonine; by CDK1. Positions 100 to 408 (EKVELQELND…KLLEGEENRI (309 aa)) constitute an IF rod domain. Residues 101–133 (KVELQELNDRFANYIEKVRFLEQQNALMVAEVN) are coil 1A. A linker 1 region spans residues 134–143 (RLRGKEPTRV). Residues 144 to 244 (AEMYEEELRE…HEEEIRELQA (101 aa)) form a coil 1B region. The interval 245-260 (QLQEQHIQVEMDISKP) is linker 12. Positions 261–279 (DLTAALRDIRAQYESIAAK) are coil 2A. The segment at 280-287 (NIAEAEEW) is linker 2. Residues 288–404 (YKSKVSDLTQ…ATYRKLLEGE (117 aa)) are coil 2B. Residues 405-464 (ENRISIPMHQTFASALNFRETSPDQRGSEVHTKKTVMIKTIETRDGEVVSEATQQQHEVL) form a tail region.

It belongs to the intermediate filament family. As to quaternary structure, homomer.

It is found in the cytoplasm. The protein resides in the myofibril. Its subcellular location is the sarcomere. The protein localises to the z line. It localises to the cell membrane. It is found in the sarcolemma. In terms of biological role, muscle-specific type III intermediate filament essential for proper muscular structure and function. Plays a crucial role in maintaining the structure of sarcomeres, inter-connecting the Z-disks and forming the myofibrils, linking them not only to the sarcolemmal cytoskeleton, but also to the nucleus and mitochondria, thus providing strength for the muscle fiber during activity. In adult striated muscle they form a fibrous network connecting myofibrils to each other and to the plasma membrane from the periphery of the Z-line structures. The protein is Desmin (DES) of Gallus gallus (Chicken).